The sequence spans 605 residues: Protein DENND6A (605 aa).

Positions 1–20 (MALPGPAVFGPGSRGSLDEA) are disordered. The uDENN domain occupies 60-239 (HCVCVVGFDL…KVRIPTCHDK (180 aa)). Ser124 carries the phosphoserine modification. One can recognise a cDENN domain in the interval 265 to 390 (EVDLFRCFCP…VKVKKLKNLK (126 aa)). Residues 392–525 (LDSKPGVYTS…KTRRKEMTQK (134 aa)) enclose the dDENN domain. At Lys507 the chain carries N6-methyllysine.

The protein belongs to the DENND6 family.

The protein localises to the recycling endosome. It is found in the cytoplasm. Its function is as follows. Guanine nucleotide exchange factor (GEF) for RAB14. Component of an endocytic recycling pathway that is required for the control of ADAM10 transport, shedding of N-cadherin/CDH2 by ADAM9 or ADAM10 and regulation of cell-cell junctions. Required for RAB14 recruitment to recycling endosomes. The polypeptide is Protein DENND6A (Dennd6a) (Mus musculus (Mouse)).